A 270-amino-acid polypeptide reads, in one-letter code: 2-heptyl-3-hydroxy-4-quinolone dioxygenase AqdC2 (270 aa).

Residues Pro25–Ser156 enclose the AB hydrolase-1 domain. A substrate-binding site is contributed by His99. His248 (proton donor/acceptor) is an active-site residue.

Belongs to the AB hydrolase superfamily.

The catalysed reaction is 2-heptyl-3-hydroxy-4(1H)-quinolone + O2 = N-octanoylanthranilate + CO + H(+). Its function is as follows. Involved in the degradation of the Pseudomonas aeruginosa quorum sensing signal molecules HHQ (2-heptyl-4-quinolone) and PQS (2-heptyl-3-hydroxy-4-quinolone) to anthranilic acid. Catalyzes the cleavage of PQS to form N-octanoylanthranilic acid and carbon monoxide. The sequence is that of 2-heptyl-3-hydroxy-4-quinolone dioxygenase AqdC2 from Rhodococcus erythropolis (Arthrobacter picolinophilus).